The sequence spans 207 residues: Small ribosomal subunit protein uS4 (207 aa).

The disordered stretch occupies residues 31-55 (KCKLDSKPGQHGRTSGARTSDYGTQ). Positions 42–53 (GRTSGARTSDYG) are enriched in polar residues. Residues 97–160 (SRLDNVVYRM…KKQARIVEAL (64 aa)) enclose the S4 RNA-binding domain.

It belongs to the universal ribosomal protein uS4 family. As to quaternary structure, part of the 30S ribosomal subunit. Contacts protein S5. The interaction surface between S4 and S5 is involved in control of translational fidelity.

Its function is as follows. One of the primary rRNA binding proteins, it binds directly to 16S rRNA where it nucleates assembly of the body of the 30S subunit. Functionally, with S5 and S12 plays an important role in translational accuracy. The sequence is that of Small ribosomal subunit protein uS4 from Burkholderia lata (strain ATCC 17760 / DSM 23089 / LMG 22485 / NCIMB 9086 / R18194 / 383).